We begin with the raw amino-acid sequence, 293 residues long: Bifunctional protein FolD (293 aa).

NADP(+) is bound by residues Gly-165–Ser-167, Ser-190, and Ile-231.

It belongs to the tetrahydrofolate dehydrogenase/cyclohydrolase family. In terms of assembly, homodimer.

The catalysed reaction is (6R)-5,10-methylene-5,6,7,8-tetrahydrofolate + NADP(+) = (6R)-5,10-methenyltetrahydrofolate + NADPH. It carries out the reaction (6R)-5,10-methenyltetrahydrofolate + H2O = (6R)-10-formyltetrahydrofolate + H(+). It participates in one-carbon metabolism; tetrahydrofolate interconversion. In terms of biological role, catalyzes the oxidation of 5,10-methylenetetrahydrofolate to 5,10-methenyltetrahydrofolate and then the hydrolysis of 5,10-methenyltetrahydrofolate to 10-formyltetrahydrofolate. The chain is Bifunctional protein FolD from Synechococcus sp. (strain WH7803).